The following is a 189-amino-acid chain: UPF0301 protein Cgl3084/cg3414 (189 aa).

Belongs to the UPF0301 (AlgH) family.

In Corynebacterium glutamicum (strain ATCC 13032 / DSM 20300 / JCM 1318 / BCRC 11384 / CCUG 27702 / LMG 3730 / NBRC 12168 / NCIMB 10025 / NRRL B-2784 / 534), this protein is UPF0301 protein Cgl3084/cg3414.